Reading from the N-terminus, the 238-residue chain is Small ribosomal subunit protein uS2 (238 aa).

The protein belongs to the universal ribosomal protein uS2 family.

This is Small ribosomal subunit protein uS2 from Prochlorococcus marinus (strain SARG / CCMP1375 / SS120).